Consider the following 434-residue polypeptide: Enolase (434 aa).

Q163 contributes to the (2R)-2-phosphoglycerate binding site. Catalysis depends on E205, which acts as the Proton donor. D242, E291, and D318 together coordinate Mg(2+). The (2R)-2-phosphoglycerate site is built by K343, R372, S373, and K394. The Proton acceptor role is filled by K343.

Belongs to the enolase family. It depends on Mg(2+) as a cofactor.

Its subcellular location is the cytoplasm. The protein resides in the secreted. It localises to the cell surface. It is found in the cell wall. The enzyme catalyses (2R)-2-phosphoglycerate = phosphoenolpyruvate + H2O. It functions in the pathway carbohydrate degradation; glycolysis; pyruvate from D-glyceraldehyde 3-phosphate: step 4/5. Functionally, catalyzes the reversible conversion of 2-phosphoglycerate (2-PG) into phosphoenolpyruvate (PEP). It is essential for the degradation of carbohydrates via glycolysis. In Streptococcus pneumoniae serotype 2 (strain D39 / NCTC 7466), this protein is Enolase.